Reading from the N-terminus, the 68-residue chain is Large ribosomal subunit protein uL29 (68 aa).

This sequence belongs to the universal ribosomal protein uL29 family.

The sequence is that of Large ribosomal subunit protein uL29 from Maricaulis maris (strain MCS10) (Caulobacter maris).